The sequence spans 267 residues: Levodione reductase (267 aa).

17 to 42 (LITGGGSGLGRATAVRLAAEGAKLSL) lines the NAD(+) pocket. Serine 152 serves as a coordination point for substrate. Tyrosine 165 functions as the Proton acceptor in the catalytic mechanism.

This sequence belongs to the short-chain dehydrogenases/reductases (SDR) family.

It carries out the reaction (4R)-hydroxy-(6R)-2,2,6-trimethylcyclohexanone + NAD(+) = (6R)-2,2,6-trimethyl-1,4-cyclohexanedione + NADH + H(+). With respect to regulation, strongly activated by monovalent cations, such as K(+), Na(+), and NH4(+). Catalyzes the regio- and stereoselective reversible NAD-dependent reduction of (6R)-2,2,6-trimethyl-1,4-cyclohexanedione (levodione) to (4R,6R)-4-hydroxy-2,2,6-trimethylcyclohexanone (actinol). In Leifsonia aquatica (Corynebacterium aquaticum), this protein is Levodione reductase (lvr).